The sequence spans 443 residues: Probable glutamate dehydrogenase (443 aa).

The active site involves Lys86.

This sequence belongs to the Glu/Leu/Phe/Val dehydrogenases family.

It catalyses the reaction L-glutamate + NAD(+) + H2O = 2-oxoglutarate + NH4(+) + NADH + H(+). The catalysed reaction is L-glutamate + NADP(+) + H2O = 2-oxoglutarate + NH4(+) + NADPH + H(+). The sequence is that of Probable glutamate dehydrogenase from Sinorhizobium fredii (strain NBRC 101917 / NGR234).